The chain runs to 256 residues: Trypsin CFT-1 (256 aa).

An N-terminal signal peptide occupies residues 1-17 (MRVTLALVALCLASVAA). Positions 18–24 (LPEKQQR) are cleaved as a propeptide — activation peptide. One can recognise a Peptidase S1 domain in the interval 25–256 (IVGGSVTTIE…RFTAWIQANA (232 aa)). A disulfide bridge links cysteine 55 with cysteine 71. Residues histidine 70 and aspartate 115 each act as charge relay system in the active site. 2 disulfides stabilise this stretch: cysteine 180/cysteine 197 and cysteine 209/cysteine 233. Serine 213 functions as the Charge relay system in the catalytic mechanism.

The protein belongs to the peptidase S1 family.

It is found in the secreted. Its subcellular location is the extracellular space. The enzyme catalyses Preferential cleavage: Arg-|-Xaa, Lys-|-Xaa.. Responsible for the activation of delta-endotoxin from Bacillus thuringiensis. The protein is Trypsin CFT-1 of Choristoneura fumiferana (Spruce budworm moth).